Consider the following 259-residue polypeptide: Ribosomal RNA small subunit methyltransferase J (259 aa).

S-adenosyl-L-methionine-binding positions include Arg109–Asp110, Glu125–Arg126, Ser161–Ser162, and Asp179.

Belongs to the methyltransferase superfamily. RsmJ family.

It localises to the cytoplasm. It catalyses the reaction guanosine(1516) in 16S rRNA + S-adenosyl-L-methionine = N(2)-methylguanosine(1516) in 16S rRNA + S-adenosyl-L-homocysteine + H(+). Specifically methylates the guanosine in position 1516 of 16S rRNA. This is Ribosomal RNA small subunit methyltransferase J from Shewanella putrefaciens (strain CN-32 / ATCC BAA-453).